The primary structure comprises 368 residues: MSATSATNFAVQTHPVKAPDEEYFFEGAEKLLELWFCSSTQNETRSLRIIPREEIDAMLDIARCKILHSKHNESIDSYVLSESSLFISDNRVILKTCGTTRLLAALPVIMQLAGAYAGLDQVQSVYYSRKNFLRPDLQPSLHKNFDAEVEYLDSFFVDGHAYCLGSLKQDRWYLYTFHREVEFPAHKQPDHTLEILMSDLDEEVLHKFTKDYAVDGNDCFMRAGIDKIIPAGADVHDELFDPCGYSMNAYMNDTDQYATIHVTPEKAFSFASFETNQDLVCLYSQTRKVLQCFRPNKILMTVFANDISEKGKDAQQQLWDRELPGYRRTNVQFVRLETETLVYAHFVRKASTGQDSSSSDEDDGERSD.

Catalysis depends on residues Glu-26 and Glu-29. Ser-83 functions as the Schiff-base intermediate with substrate; via pyruvic acid in the catalytic mechanism. Ser-83 is subject to Pyruvic acid (Ser); by autocatalysis. Cys-97 (proton donor; for catalytic activity) is an active-site residue. Catalysis depends on proton acceptor; for processing activity residues Ser-246 and His-261.

It belongs to the eukaryotic AdoMetDC family. Heterotetramer of two alpha and two beta chains. Pyruvate serves as cofactor. Post-translationally, is synthesized initially as an inactive proenzyme. Formation of the active enzyme involves a self-maturation process in which the active site pyruvoyl group is generated from an internal serine residue via an autocatalytic post-translational modification. Two non-identical subunits are generated from the proenzyme in this reaction, and the pyruvate is formed at the N-terminus of the alpha chain, which is derived from the carboxyl end of the proenzyme. The post-translation cleavage follows an unusual pathway, termed non-hydrolytic serinolysis, in which the side chain hydroxyl group of the serine supplies its oxygen atom to form the C-terminus of the beta chain, while the remainder of the serine residue undergoes an oxidative deamination to produce ammonia and the pyruvoyl group blocking the N-terminus of the alpha chain.

It catalyses the reaction S-adenosyl-L-methionine + H(+) = S-adenosyl 3-(methylsulfanyl)propylamine + CO2. It functions in the pathway amine and polyamine biosynthesis; S-adenosylmethioninamine biosynthesis; S-adenosylmethioninamine from S-adenosyl-L-methionine: step 1/1. Functionally, essential for biosynthesis of the polyamines spermidine and spermine. Polyamines are essential for cell proliferation and are implicated in cellular processes, ranging from DNA replication to apoptosis. The protein is S-adenosylmethionine decarboxylase proenzyme of Caenorhabditis elegans.